A 183-amino-acid chain; its full sequence is D-glycero-alpha-D-manno-heptose-1,7-bisphosphate 7-phosphatase (183 aa).

Zn(2+) contacts are provided by Cys-93, His-95, Cys-108, and Cys-110.

The protein belongs to the GmhB family.

The protein localises to the cytoplasm. It catalyses the reaction D-glycero-alpha-D-manno-heptose 1,7-bisphosphate + H2O = D-glycero-alpha-D-manno-heptose 1-phosphate + phosphate. Its pathway is nucleotide-sugar biosynthesis; GDP-D-glycero-alpha-D-manno-heptose biosynthesis; GDP-D-glycero-alpha-D-manno-heptose from D-glycero-alpha-D-manno-heptose 7-phosphate: step 2/3. Its function is as follows. Converts the D-glycero-alpha-D-manno-heptose 1,7-bisphosphate intermediate into D-glycero-alpha-D-manno-heptose 1-phosphate by removing the phosphate group at the C-7 position. This Photorhabdus laumondii subsp. laumondii (strain DSM 15139 / CIP 105565 / TT01) (Photorhabdus luminescens subsp. laumondii) protein is D-glycero-alpha-D-manno-heptose-1,7-bisphosphate 7-phosphatase (gmhB2).